The following is a 173-amino-acid chain: Large ribosomal subunit protein uL10 (173 aa).

It belongs to the universal ribosomal protein uL10 family. Part of the ribosomal stalk of the 50S ribosomal subunit. The N-terminus interacts with L11 and the large rRNA to form the base of the stalk. The C-terminus forms an elongated spine to which L12 dimers bind in a sequential fashion forming a multimeric L10(L12)X complex.

Its function is as follows. Forms part of the ribosomal stalk, playing a central role in the interaction of the ribosome with GTP-bound translation factors. This Chlorobium phaeobacteroides (strain BS1) protein is Large ribosomal subunit protein uL10.